The primary structure comprises 144 residues: Large ribosomal subunit protein uL15 (144 aa).

Residues 1-53 (MRLNTLSPAEGAKHSAKRLGRGIGSGLGKTGGRGHKGQKSRTGGGVRRGFEGG) are disordered. The segment covering 21-31 (RGIGSGLGKTG) has biased composition (gly residues).

This sequence belongs to the universal ribosomal protein uL15 family. In terms of assembly, part of the 50S ribosomal subunit.

Binds to the 23S rRNA. The sequence is that of Large ribosomal subunit protein uL15 from Haemophilus influenzae (strain ATCC 51907 / DSM 11121 / KW20 / Rd).